The primary structure comprises 176 residues: Adenine phosphoribosyltransferase (176 aa).

This sequence belongs to the purine/pyrimidine phosphoribosyltransferase family. In terms of assembly, homodimer.

Its subcellular location is the cytoplasm. It catalyses the reaction AMP + diphosphate = 5-phospho-alpha-D-ribose 1-diphosphate + adenine. It participates in purine metabolism; AMP biosynthesis via salvage pathway; AMP from adenine: step 1/1. In terms of biological role, catalyzes a salvage reaction resulting in the formation of AMP, that is energically less costly than de novo synthesis. This is Adenine phosphoribosyltransferase from Methylobacillus flagellatus (strain ATCC 51484 / DSM 6875 / VKM B-1610 / KT).